Reading from the N-terminus, the 59-residue chain is Chromatin protein Cren7 (59 aa).

This sequence belongs to the Cren7 family. Monomer. Methylated at multiple sites, to varying extents.

Its subcellular location is the chromosome. It localises to the cytoplasm. In terms of biological role, a chromatin protein, binds double-stranded DNA without sequence specificity. Constrains negative DNA supercoils. The protein is Chromatin protein Cren7 of Pyrobaculum aerophilum (strain ATCC 51768 / DSM 7523 / JCM 9630 / CIP 104966 / NBRC 100827 / IM2).